Reading from the N-terminus, the 547-residue chain is Chaperonin GroEL (547 aa).

ATP-binding positions include 30–33 (TLGP), Lys-51, 87–91 (DGTTT), Gly-415, and Asp-496.

It belongs to the chaperonin (HSP60) family. As to quaternary structure, forms a cylinder of 14 subunits composed of two heptameric rings stacked back-to-back. Interacts with the co-chaperonin GroES.

It localises to the cytoplasm. It catalyses the reaction ATP + H2O + a folded polypeptide = ADP + phosphate + an unfolded polypeptide.. Together with its co-chaperonin GroES, plays an essential role in assisting protein folding. The GroEL-GroES system forms a nano-cage that allows encapsulation of the non-native substrate proteins and provides a physical environment optimized to promote and accelerate protein folding. This Actinobacillus pleuropneumoniae (Haemophilus pleuropneumoniae) protein is Chaperonin GroEL.